Here is a 146-residue protein sequence, read N- to C-terminus: Large ribosomal subunit protein uL15 (146 aa).

Residues 1-13 (MKLHELQPAEGSR) show a composition bias toward basic and acidic residues. Positions 1 to 58 (MKLHELQPAEGSRKVRNRVGRGIGSGNGKTAGKGHKGQKARSGGGVRPGFEGGQNPLY) are disordered. Gly residues-rich tracts occupy residues 21 to 31 (RGIGSGNGKTA) and 42 to 52 (SGGGVRPGFEG).

It belongs to the universal ribosomal protein uL15 family. As to quaternary structure, part of the 50S ribosomal subunit.

Its function is as follows. Binds to the 23S rRNA. The chain is Large ribosomal subunit protein uL15 from Shouchella clausii (strain KSM-K16) (Alkalihalobacillus clausii).